The primary structure comprises 442 residues: MRLSRYFLPILKENPKEAEIVSHRLMLRSGMIRQQSAGIYSWLPIGLKVLNKVCDIIREEQNRAGANEILMPTIQSADLWRESGRYDAYGKEMLRIQDRQERDMLFGPTNEEMVTDIFRSYVRSYKDLPLNLYHIQWKFRDEVRPRFGVMRSREFLMKDAYSFDLDYEGAKMAYYRMFVSYLRTFARVGLQAIPMRADTGPIGGDLSHEFIILAETGESQVFCDKAYLDLAVPGADTDFRNDAQLTDIVNRWTTPYAATDEMHDEADWSKVKPEDQVSARGIEVGHIFHFGTKYSEPMGAKVQGPDGKEHLVSMGSYGIGPSRLVAAAIEAFHDDAGIIWPKAIAPFGAGIVNMKPGDEGCDAVSEKIYEALTNAGVDPLLDDTDDRPGAKFATMDLIGLPTQVIVGPRGVAAGEVEIKDRKTGERQSLSVEAAINLLTAEA.

Belongs to the class-II aminoacyl-tRNA synthetase family. ProS type 2 subfamily. As to quaternary structure, homodimer.

It localises to the cytoplasm. It carries out the reaction tRNA(Pro) + L-proline + ATP = L-prolyl-tRNA(Pro) + AMP + diphosphate. In terms of biological role, catalyzes the attachment of proline to tRNA(Pro) in a two-step reaction: proline is first activated by ATP to form Pro-AMP and then transferred to the acceptor end of tRNA(Pro). The protein is Proline--tRNA ligase of Brucella anthropi (strain ATCC 49188 / DSM 6882 / CCUG 24695 / JCM 21032 / LMG 3331 / NBRC 15819 / NCTC 12168 / Alc 37) (Ochrobactrum anthropi).